The sequence spans 495 residues: L-arabinose isomerase (495 aa).

Glu305, Glu332, His349, and His448 together coordinate Mn(2+).

This sequence belongs to the arabinose isomerase family. The cofactor is Mn(2+).

It catalyses the reaction beta-L-arabinopyranose = L-ribulose. It functions in the pathway carbohydrate degradation; L-arabinose degradation via L-ribulose; D-xylulose 5-phosphate from L-arabinose (bacterial route): step 1/3. In terms of biological role, catalyzes the conversion of L-arabinose to L-ribulose. In Mannheimia succiniciproducens (strain KCTC 0769BP / MBEL55E), this protein is L-arabinose isomerase.